Consider the following 309-residue polypeptide: Olfactory receptor 4A47 (309 aa).

At 1–23 (MEPRKNVTDFVLLGFTQNPKEQK) the chain is on the extracellular side. A glycan (N-linked (GlcNAc...) asparagine) is linked at asparagine 6. A helical transmembrane segment spans residues 24–47 (VLFVMFLLFYILTMVGNLLIVVTV). Topologically, residues 48 to 55 (TVSETLGS) are cytoplasmic. Residues 56–77 (PMYFFLAGLSFIDIIYSSSISP) traverse the membrane as a helical segment. The Extracellular portion of the chain corresponds to 78–98 (RLISGLFFGNNSISFQSCMAQ). Asparagine 87 carries N-linked (GlcNAc...) asparagine glycosylation. An intrachain disulfide couples cysteine 95 to cysteine 187. The helical transmembrane segment at 99-118 (LFIEHIFGGSEVFLLLVMAY) threads the bilayer. The Cytoplasmic segment spans residues 119-137 (DCYVAICKPLHYLVIMRQW). A helical transmembrane segment spans residues 138–156 (VCVVLLVVSWVGGFLHSVF). Topologically, residues 157 to 193 (QLSIIYGLPFCGPNVIDHFFCDMYPLLKLVCTDTHAI) are extracellular. Residues 194-217 (GLLVVANGGLACTIVFLLLLISYG) form a helical membrane-spanning segment. Over 218-233 (VILHSLKNLSQKGRQK) the chain is Cytoplasmic. Residues 234–256 (ALSTCSSHMTVVVFFFVPCIFMY) traverse the membrane as a helical segment. Residues 257–267 (ARPARTFPIDK) lie on the Extracellular side of the membrane. Residues 268–287 (SVSVFYTVITPMLNPLIYTL) form a helical membrane-spanning segment. At 288–309 (RNSEMTSAMKKLWRRDLISSST) the chain is on the cytoplasmic side.

It belongs to the G-protein coupled receptor 1 family.

It is found in the cell membrane. In terms of biological role, odorant receptor. The chain is Olfactory receptor 4A47 (OR4A47) from Homo sapiens (Human).